We begin with the raw amino-acid sequence, 366 residues long: tRNA/tmRNA (uracil-C(5))-methyltransferase (366 aa).

Residues glutamine 190, tyrosine 218, asparagine 223, glutamate 239, and aspartate 299 each coordinate S-adenosyl-L-methionine. The active-site Nucleophile is cysteine 324. Residue glutamate 358 is the Proton acceptor of the active site.

This sequence belongs to the class I-like SAM-binding methyltransferase superfamily. RNA M5U methyltransferase family. TrmA subfamily.

The enzyme catalyses uridine(54) in tRNA + S-adenosyl-L-methionine = 5-methyluridine(54) in tRNA + S-adenosyl-L-homocysteine + H(+). The catalysed reaction is uridine(341) in tmRNA + S-adenosyl-L-methionine = 5-methyluridine(341) in tmRNA + S-adenosyl-L-homocysteine + H(+). Its function is as follows. Dual-specificity methyltransferase that catalyzes the formation of 5-methyluridine at position 54 (m5U54) in all tRNAs, and that of position 341 (m5U341) in tmRNA (transfer-mRNA). In Salmonella arizonae (strain ATCC BAA-731 / CDC346-86 / RSK2980), this protein is tRNA/tmRNA (uracil-C(5))-methyltransferase.